The chain runs to 65 residues: Photosystem II reaction center protein J (65 aa).

Basic and acidic residues predominate over residues 1-17 (MSTKLKGPDGRIPDRLP). The disordered stretch occupies residues 1 to 20 (MSTKLKGPDGRIPDRLPDGT). A helical transmembrane segment spans residues 36-56 (LWLVATVGGMAVLSVLGLFFF).

This sequence belongs to the PsbJ family. In terms of assembly, PSII is composed of 1 copy each of membrane proteins PsbA, PsbB, PsbC, PsbD, PsbE, PsbF, PsbH, PsbI, PsbJ, PsbK, PsbL, PsbM, PsbT, PsbX, PsbY, Psb30/Ycf12, peripheral proteins PsbO, CyanoQ (PsbQ), PsbU, PsbV and a large number of cofactors. It forms dimeric complexes.

The protein localises to the cellular thylakoid membrane. Its function is as follows. One of the components of the core complex of photosystem II (PSII). PSII is a light-driven water:plastoquinone oxidoreductase that uses light energy to abstract electrons from H(2)O, generating O(2) and a proton gradient subsequently used for ATP formation. It consists of a core antenna complex that captures photons, and an electron transfer chain that converts photonic excitation into a charge separation. In Prochlorococcus marinus (strain MIT 9303), this protein is Photosystem II reaction center protein J.